Here is a 389-residue protein sequence, read N- to C-terminus: Probable dual-specificity RNA methyltransferase RlmN (389 aa).

Residue Glu114 is the Proton acceptor of the active site. Residues 120–358 (QHYGLSVCVT…CVVRQEHGTD (239 aa)) enclose the Radical SAM core domain. Cysteines 127 and 363 form a disulfide. 3 residues coordinate [4Fe-4S] cluster: Cys134, Cys138, and Cys141. S-adenosyl-L-methionine contacts are provided by residues 186–187 (GE), Ser218, 241–243 (SLH), and Asn319. Cys363 serves as the catalytic S-methylcysteine intermediate. The tract at residues 370-389 (TMKRDRQKAVAEASGKSEGK) is disordered. The span at 371 to 389 (MKRDRQKAVAEASGKSEGK) shows a compositional bias: basic and acidic residues.

Belongs to the radical SAM superfamily. RlmN family. It depends on [4Fe-4S] cluster as a cofactor.

It is found in the cytoplasm. The enzyme catalyses adenosine(2503) in 23S rRNA + 2 reduced [2Fe-2S]-[ferredoxin] + 2 S-adenosyl-L-methionine = 2-methyladenosine(2503) in 23S rRNA + 5'-deoxyadenosine + L-methionine + 2 oxidized [2Fe-2S]-[ferredoxin] + S-adenosyl-L-homocysteine. The catalysed reaction is adenosine(37) in tRNA + 2 reduced [2Fe-2S]-[ferredoxin] + 2 S-adenosyl-L-methionine = 2-methyladenosine(37) in tRNA + 5'-deoxyadenosine + L-methionine + 2 oxidized [2Fe-2S]-[ferredoxin] + S-adenosyl-L-homocysteine. In terms of biological role, specifically methylates position 2 of adenine 2503 in 23S rRNA and position 2 of adenine 37 in tRNAs. This is Probable dual-specificity RNA methyltransferase RlmN from Streptococcus thermophilus (strain CNRZ 1066).